The following is a 376-amino-acid chain: Protein XRP2 (376 aa).

Residues 1-55 (MGCFFSKKSRRKSPKKDAALPTGDESATGNDLAETNNTALGSNSNQEAPKQYSWD) are disordered. Glycine 2 carries N-myristoyl glycine lipidation. Cysteine 3 is lipidated: S-palmitoyl cysteine. The segment covering 25–48 (ESATGNDLAETNNTALGSNSNQEA) has biased composition (polar residues). In terms of domain architecture, C-CAP/cofactor C-like spans 49-204 (PKQYSWDKRE…NWSNIHDFTP (156 aa)). GTP contacts are provided by residues 123-124 (GS) and 140-143 (QQFR).

Belongs to the TBCC family. Post-translationally, myristoylated on Gly-2; which may be required for membrane targeting. Palmitoylated on Cys-3; which may be required for plasma membrane targeting. In the retina, detected in both rod and cone photoreceptors (at protein level). Has strongest expression in the retinal outer nuclear layer (ONL) and weaker expression in the outer plexiform layer (OPL) and inner plexiform layer (IPL) (at protein level). Expressed in all tissues tested.

It is found in the cell membrane. Its subcellular location is the cell projection. The protein localises to the cilium. In terms of biological role, acts as a GTPase-activating protein (GAP) involved in trafficking between the Golgi and the ciliary membrane. Acts as a GTPase-activating protein (GAP) for tubulin in concert with tubulin-specific chaperone C, but does not enhance tubulin heterodimerization. In the retina, required for maintenance of rod and cone photoreceptor cells. May have a role in normal retinal localization of the transducins GNB1 and GNAT1, and the rhodopsin kinase GRK1. The polypeptide is Protein XRP2 (Danio rerio (Zebrafish)).